The chain runs to 208 residues: Uracil phosphoribosyltransferase (208 aa).

Residues Arg78, Arg103, and 130–138 (DPMLATGGS) each bind 5-phospho-alpha-D-ribose 1-diphosphate. Uracil-binding positions include Ile193 and 198–200 (GDA). Asp199 contributes to the 5-phospho-alpha-D-ribose 1-diphosphate binding site.

Belongs to the UPRTase family. Requires Mg(2+) as cofactor.

The catalysed reaction is UMP + diphosphate = 5-phospho-alpha-D-ribose 1-diphosphate + uracil. It functions in the pathway pyrimidine metabolism; UMP biosynthesis via salvage pathway; UMP from uracil: step 1/1. With respect to regulation, allosterically activated by GTP. Catalyzes the conversion of uracil and 5-phospho-alpha-D-ribose 1-diphosphate (PRPP) to UMP and diphosphate. The sequence is that of Uracil phosphoribosyltransferase from Salmonella agona (strain SL483).